A 238-amino-acid polypeptide reads, in one-letter code: Ribitol-5-phosphate cytidylyltransferase 2 (238 aa).

CTP contacts are provided by residues 7–10 (LAGG) and 81–87 (GTDRNET).

This sequence belongs to the IspD/TarI cytidylyltransferase family. TarI subfamily. Heterodimer together with TarJ.

The enzyme catalyses D-ribitol 5-phosphate + CTP + H(+) = CDP-L-ribitol + diphosphate. It functions in the pathway cell wall biogenesis; poly(ribitol phosphate) teichoic acid biosynthesis. Its function is as follows. Catalyzes the transfer of the cytidylyl group of CTP to D-ribitol 5-phosphate. This Staphylococcus aureus (strain NCTC 8325 / PS 47) protein is Ribitol-5-phosphate cytidylyltransferase 2.